Consider the following 191-residue polypeptide: Molybdenum cofactor guanylyltransferase (191 aa).

Residues 13–15, lysine 26, aspartate 72, and aspartate 102 each bind GTP; that span reads LAG. Aspartate 102 is a binding site for Mg(2+).

This sequence belongs to the MobA family. In terms of assembly, monomer. The cofactor is Mg(2+).

The protein resides in the cytoplasm. It carries out the reaction Mo-molybdopterin + GTP + H(+) = Mo-molybdopterin guanine dinucleotide + diphosphate. Functionally, transfers a GMP moiety from GTP to Mo-molybdopterin (Mo-MPT) cofactor (Moco or molybdenum cofactor) to form Mo-molybdopterin guanine dinucleotide (Mo-MGD) cofactor. This is Molybdenum cofactor guanylyltransferase from Pseudomonas putida (Arthrobacter siderocapsulatus).